Here is a 580-residue protein sequence, read N- to C-terminus: Mucolipin-1 (580 aa).

Positions 1-38 (MTAPAGPRGSETERLLTPNPGYGTQAGPSPAPPTPPEE) are disordered. Topologically, residues 1-65 (MTAPAGPRGS…FRAKGRKPCK (65 aa)) are cytoplasmic. Ser-10 carries the phosphoserine modification. The short motif at 11 to 16 (ETERLL) is the Dileucine motif; mediates targeting to lysosomes element. Positions 42–62 (RRRLKYFFMSPCDKFRAKGRK) are interaction with phosphoinositides. Residues 66–86 (LMLQVVKILVVTVQLILFGLS) traverse the membrane as a helical segment. Residues 87-298 (NQLAVTFREE…VFQHGDNSFR (212 aa)) are Extracellular-facing. Positions 107 to 121 (LGYSDGADDTFAAYT) are extracellular/lumenal pore loop. The cysteines at positions 166 and 192 are disulfide-linked. N-linked (GlcNAc...) asparagine glycosylation is present at Asn-230. Cys-253 and Cys-284 are joined by a disulfide. The chain crosses the membrane as a helical span at residues 299–321 (LLFDVVVILTCSLSFLLCARSLL). The Cytoplasmic segment spans residues 322–350 (RGFLLQNEFVGFMWRQRGRVISLWERLEF). A helical membrane pass occupies residues 351-371 (VNGWYILLVTSDVLTISGTIM). Residues 372–382 (KIGIEAKNLAS) are Extracellular-facing. Residues 383 to 405 (YDVCSILLGTSTLLVWVGVIRYL) traverse the membrane as a helical segment. Topologically, residues 406 to 427 (TFFHNYNILIATLRVALPSVMR) are cytoplasmic. The helical transmembrane segment at 428–448 (FCCCVAVIYLGYCFCGWIVLG) threads the bilayer. The Extracellular portion of the chain corresponds to 449–456 (PYHVKFRS). The segment at residues 457-477 (LSMVSECLFSLINGDDMFVTF) is an intramembrane region (pore-forming). The Selectivity filter motif lies at 469-474 (NGDDMF). Residues 478-491 (AAMQAQQGRSSLVW) are Extracellular-facing. The helical transmembrane segment at 492 to 513 (LFSQLYLYSFISLFIYMVLSLF) threads the bilayer. Topologically, residues 514 to 580 (IALITGAYDT…PSEEHSLLVN (67 aa)) are cytoplasmic. Ser-557 and Ser-559 each carry phosphoserine; by PAK. Residues 565 to 567 (CCC) are required for palmitoylation and association with membranes. The Dileucine internalization motif; mediates AP2 complex-dependent internalization motif lies at 573-578 (EEHSLL).

It belongs to the transient receptor (TC 1.A.4) family. Polycystin subfamily. MCOLN1 sub-subfamily. As to quaternary structure, homotetramer. Homooligomer. Can heterooligomerize with MCOLN2 or MCOLN3; heteromeric assemblies have different channel properties as compared to the respective homooligomers and may be tissue-specific. Interacts with PDCD6. Interacts with TMEM163. Interacts with LAPTM4B. Palmitoylated; involved in association with membranes. Post-translationally, phosphorylation by PKA inhibits channel activity. Dephosphorylation increases activity. In terms of processing, proteolytically cleaved probably involving multiple lysosomal proteases including cathepsin B; inhibits lysosomal channel activity. As to expression, widely expressed in adult and fetal tissues.

It is found in the late endosome membrane. The protein resides in the lysosome membrane. Its subcellular location is the cytoplasmic vesicle membrane. It localises to the cell projection. The protein localises to the phagocytic cup. It is found in the cytoplasmic vesicle. The protein resides in the phagosome membrane. Its subcellular location is the cell membrane. It carries out the reaction Ca(2+)(in) = Ca(2+)(out). It catalyses the reaction Fe(2+)(in) = Fe(2+)(out). The catalysed reaction is Mg(2+)(in) = Mg(2+)(out). The enzyme catalyses K(+)(in) = K(+)(out). It carries out the reaction Na(+)(in) = Na(+)(out). Its activity is regulated as follows. Channel activity is controlled by multiple regulatory mechanisms in different subcellular compartments. Channel function is transiently modulated by changes in Ca(2+) in a pH-dependent manner; pH changes modify the aggregation state of unitary channels; a negative cooperativity between extracellular/lumenal Ca(2+) and H(+) is suggested. Regulated by phosphoinositides in a compartment-specific manner: in lysosomes activated by PtdIns(3,5)P2 (Phosphatidylinositol 3,5-bisphosphate) and at the plasma membrane inhibited by PtdIns(4,5)P2 (Phosphatidylinositol 4,5-bisphosphate). Functionally, nonselective cation channel probably playing a role in the regulation of membrane trafficking events and of metal homeostasis. Acts as a Ca(2+)-permeable cation channel with inwardly rectifying activity. Proposed to play a major role in Ca(2+) release from late endosome and lysosome vesicles to the cytoplasm, which is important for many lysosome-dependent cellular events, including the fusion and trafficking of these organelles, exocytosis and autophagy. Required for efficient uptake of large particles in macrophages in which Ca(2+) release from the lysosomes triggers lysosomal exocytosis. May also play a role in phagosome-lysosome fusion. Involved in lactosylceramide trafficking indicative for a role in the regulation of late endocytic membrane fusion/fission events. By mediating lysosomal Ca(2+) release is involved in regulation of mTORC1 signaling and in mTOR/TFEB-dependent lysosomal adaptation to environmental cues such as nutrient levels. Seems to act as lysosomal active oxygen species (ROS) sensor involved in ROS-induced TFEB activation and autophagy. Also functions as a Fe(2+) permeable channel in late endosomes and lysosomes. Also permeable to Mg(2+), Na(+). K(+) and Cs(+). Proposed to play a role in zinc homeostasis probably implicating its association with TMEM163 In adaptive immunity, TRPML2 and TRPML1 may play redundant roles in the function of the specialized lysosomes of B cells. In terms of biological role, may contribute to cellular lipase activity within the late endosomal pathway or at the cell surface which may be involved in processes of membrane reshaping and vesiculation, especially the growth of tubular structures. However, it is not known, whether it conveys the enzymatic activity directly, or merely facilitates the activity of an associated phospholipase. This is Mucolipin-1 from Homo sapiens (Human).